The following is a 181-amino-acid chain: Glutamyl-tRNA(Gln) amidotransferase subunit C, chloroplastic/mitochondrial (181 aa).

Belongs to the GatC family. As to quaternary structure, subunit of the heterotrimeric GatCAB amidotransferase (AdT) complex, composed of A, B and C subunits.

The protein localises to the mitochondrion. Its subcellular location is the plastid. It is found in the chloroplast. The enzyme catalyses L-glutamyl-tRNA(Gln) + L-glutamine + ATP + H2O = L-glutaminyl-tRNA(Gln) + L-glutamate + ADP + phosphate + H(+). Allows the formation of correctly charged Gln-tRNA(Gln) through the transamidation of misacylated Glu-tRNA(Gln) in chloroplasts and mitochondria. The reaction takes place in the presence of glutamine and ATP through an activated gamma-phospho-Glu-tRNA(Gln). This Picea sitchensis (Sitka spruce) protein is Glutamyl-tRNA(Gln) amidotransferase subunit C, chloroplastic/mitochondrial.